The chain runs to 135 residues: Ribosome-binding factor A (135 aa).

The protein belongs to the RbfA family. In terms of assembly, monomer. Binds 30S ribosomal subunits, but not 50S ribosomal subunits or 70S ribosomes.

It localises to the cytoplasm. Functionally, one of several proteins that assist in the late maturation steps of the functional core of the 30S ribosomal subunit. Associates with free 30S ribosomal subunits (but not with 30S subunits that are part of 70S ribosomes or polysomes). Required for efficient processing of 16S rRNA. May interact with the 5'-terminal helix region of 16S rRNA. The polypeptide is Ribosome-binding factor A (Novosphingobium aromaticivorans (strain ATCC 700278 / DSM 12444 / CCUG 56034 / CIP 105152 / NBRC 16084 / F199)).